Here is a 77-residue protein sequence, read N- to C-terminus: Large ribosomal subunit protein uL29 (77 aa).

This sequence belongs to the universal ribosomal protein uL29 family.

This chain is Large ribosomal subunit protein uL29, found in Mycolicibacterium gilvum (strain PYR-GCK) (Mycobacterium gilvum (strain PYR-GCK)).